Here is a 112-residue protein sequence, read N- to C-terminus: DNA-binding protein TGAM_1196 (112 aa).

This sequence belongs to the PDCD5 family.

The protein is DNA-binding protein TGAM_1196 of Thermococcus gammatolerans (strain DSM 15229 / JCM 11827 / EJ3).